The following is a 334-amino-acid chain: Adenine deaminase (334 aa).

Zn(2+) is bound by residues histidine 14, histidine 16, and histidine 194. The Proton donor role is filled by glutamate 197. Aspartate 275 is a Zn(2+) binding site. Aspartate 276 serves as a coordination point for substrate.

It belongs to the metallo-dependent hydrolases superfamily. Adenosine and AMP deaminases family. Adenine deaminase type 2 subfamily. It depends on Zn(2+) as a cofactor.

The catalysed reaction is adenine + H2O + H(+) = hypoxanthine + NH4(+). Its function is as follows. Catalyzes the hydrolytic deamination of adenine to hypoxanthine. Plays an important role in the purine salvage pathway and in nitrogen catabolism. The protein is Adenine deaminase of Hahella chejuensis (strain KCTC 2396).